The chain runs to 272 residues: Insulin-like growth factor-binding protein 5 (272 aa).

Residues 1 to 20 (MVLLTAVLLLLAAYAGPAQS) form the signal peptide. The 81-residue stretch at 23 to 103 (SFVHCEPCDE…LHGRGVCLNE (81 aa)) folds into the IGFBP N-terminal domain. 6 cysteine pairs are disulfide-bonded: cysteine 27–cysteine 53, cysteine 30–cysteine 55, cysteine 38–cysteine 56, cysteine 45–cysteine 59, cysteine 67–cysteine 80, and cysteine 74–cysteine 100. The segment covering 111–122 (KIERDSREHEEP) has biased composition (basic and acidic residues). The tract at residues 111 to 130 (KIERDSREHEEPTTSEMAEE) is disordered. Serine 116 bears the Phosphoserine; by FAM20C mark. The O-linked (HexNAc...) threonine glycan is linked to threonine 172. The Thyroglobulin type-1 domain maps to 189 to 263 (QGPCRRHMEA…MEYVDGDFQC (75 aa)). 3 cysteine pairs are disulfide-bonded: cysteine 192–cysteine 219, cysteine 230–cysteine 241, and cysteine 243–cysteine 263.

In terms of assembly, interacts with IGF1; this interaction enhances the growth stimulatory effects of IGF1 on fibroblasts. Interacts with CAV1; this interaction allows trafficking of IGFBP5 from the plasma membrane to the nucleus. Interacts with NCL; this interaction is necessary for IGFBP5 localization to the nucleus. Post-translationally, cleaved by C1S in extracellular space. Osteosarcoma, and at lower levels in liver, kidney and brain.

It localises to the secreted. The protein localises to the cytoplasm. The protein resides in the nucleus. In terms of biological role, multifunctional protein that plays a critical role in regulating the availability of IGFs to their receptors and thereby regulates IGF-mediated cellular processes including proliferation, differentiation, and apoptosis in a cell-type specific manner. Increases the cell proliferation of osteoblasts, intestinal smooth muscle cells and neuroblastoma cells. Enhances adhesion and survival of epithelial cells but decreases adhesion of mesenchymal cells. Once secreted, acts as a major mediator of mTORC1-dependent feedback inhibition of IGF1 signaling. Also plays a role in the induction of extracellular matrix (ECM) production and deposition independently of its nuclear translocation and binding to IGFs. Acts itself as a growth factor that can act independently of IGFs to regulate bone formation. Acts as a ligand for the ROR1 receptor which triggers formation of ROR1/HER2 heterodimer to enhance CREB oncogenic signaling. In Homo sapiens (Human), this protein is Insulin-like growth factor-binding protein 5 (IGFBP5).